Reading from the N-terminus, the 221-residue chain is Sugar transporter SWEET1 (221 aa).

The next 7 membrane-spanning stretches (helical) occupy residues 3–23, 42–62, 68–88, 96–116, 129–149, 160–180, and 186–206; these read AGGFLDSLIYGACVVFTLGMF, VQFLPFLTTEVNNLGWLSYGA, ILIVVNTVGAALQTLYILAYL, VVLLQTATLLGVLLLGYGYFW, LGLFCSVFTISMYLSPLADLA, LSYPLTIATLLTSASWCLYGF, and YIMVSNFPGIVTSFIRFWLFW. The 85-residue stretch at 10-94 folds into the MtN3/slv 1 domain; that stretch reads LIYGACVVFT…LAYLHYCPRK (85 aa). The region spanning 127–212 is the MtN3/slv 2 domain; it reads QQLGLFCSVF…WLFWKYPQEQ (86 aa). Residues 149–221 form a mediates interaction with TRPV2 region; sequence AKVIQTKSTQ…QDRNYWLLQT (73 aa).

This sequence belongs to the SWEET sugar transporter family. Interacts with TRPV2; the interaction probably occurs intracellularly and depends on TRPV2 N-glycosylation. As to expression, ubiquitously expressed with highest expression in oviduct, epididymis and intestine.

It localises to the golgi apparatus membrane. Its subcellular location is the cell membrane. Mediates sugar transport across membranes. May stimulate V(D)J recombination by the activation of RAG1. This chain is Sugar transporter SWEET1 (SLC50A1), found in Homo sapiens (Human).